We begin with the raw amino-acid sequence, 301 residues long: Protoheme IX farnesyltransferase (301 aa).

8 helical membrane passes run V25 to V45, W47 to I67, I97 to N117, L119 to L139, I147 to G167, A173 to L193, F235 to F255, and I279 to I299.

Belongs to the UbiA prenyltransferase family. Protoheme IX farnesyltransferase subfamily.

The protein localises to the cell inner membrane. The catalysed reaction is heme b + (2E,6E)-farnesyl diphosphate + H2O = Fe(II)-heme o + diphosphate. It participates in porphyrin-containing compound metabolism; heme O biosynthesis; heme O from protoheme: step 1/1. In terms of biological role, converts heme B (protoheme IX) to heme O by substitution of the vinyl group on carbon 2 of heme B porphyrin ring with a hydroxyethyl farnesyl side group. This Paraburkholderia xenovorans (strain LB400) protein is Protoheme IX farnesyltransferase.